Consider the following 307-residue polypeptide: Thymidylate synthase (307 aa).

Arg44 serves as a coordination point for dUMP. Ser108 bears the Phosphoserine mark. DUMP contacts are provided by residues 169-170 (RR), 189-190 (CH), 209-212 (RSGD), Asn220, and 250-252 (HIY). The active-site Nucleophile is the Cys189. Asp212 is a binding site for (6R)-5,10-methylene-5,6,7,8-tetrahydrofolate. Residues Lys286 and Lys302 each participate in a glycyl lysine isopeptide (Lys-Gly) (interchain with G-Cter in SUMO2) cross-link. Ala306 is a binding site for (6R)-5,10-methylene-5,6,7,8-tetrahydrofolate.

The protein belongs to the thymidylate synthase family. Homodimer.

It is found in the nucleus. Its subcellular location is the cytoplasm. It localises to the mitochondrion. The protein resides in the mitochondrion matrix. The protein localises to the mitochondrion inner membrane. The enzyme catalyses dUMP + (6R)-5,10-methylene-5,6,7,8-tetrahydrofolate = 7,8-dihydrofolate + dTMP. It functions in the pathway pyrimidine metabolism; dTTP biosynthesis. Catalyzes the reductive methylation of 2'-deoxyuridine 5'-monophosphate (dUMP) to thymidine 5'-monophosphate (dTMP), using the cosubstrate, 5,10- methylenetetrahydrofolate (CH2H4folate) as a 1-carbon donor and reductant and contributes to the de novo mitochondrial thymidylate biosynthesis pathway. This chain is Thymidylate synthase (Tyms), found in Mus musculus (Mouse).